The primary structure comprises 965 residues: Phosphatidylethanolamine N-methyltransferase (965 aa).

Residues 1-55 are disordered; sequence MSSSAADPFAARLNSDVRQRHPTASATSKNVEGTSQQKQQQQQQQSEANAAASRV. Residues 1 to 91 are Lumenal-facing; that stretch reads MSSSAADPFA…DPREPKNLSD (91 aa). Polar residues predominate over residues 22–35; it reads PTASATSKNVEGTS. Over residues 36-45 the composition is skewed to low complexity; the sequence is QQKQQQQQQQ. A helical transmembrane segment spans residues 92-112; sequence VAVLAIIALHFLAAYYLPWGV. Topologically, residues 113–115 are cytoplasmic; it reads KRP. A helical membrane pass occupies residues 116-136; sequence LFAAIFMFWRLAYNVGIGYLL. Over 137–201 the chain is Lumenal; sequence TIQSKYKLLV…EYNTWLTFRR (65 aa). The chain crosses the membrane as a helical span at residues 202–222; sequence VVDLILMCDFISYCLFAIVCA. At 223-229 the chain is on the cytoplasmic side; the sequence is HKPDGEG. A helical membrane pass occupies residues 230-250; it reads LFMCFARWAAGITLVGFNLWV. The Lumenal portion of the chain corresponds to 251–279; the sequence is KLDAHRVVKDYAWYWGDFFYLIEQELTFD. The helical transmembrane segment at 280-300 threads the bilayer; sequence GVFELAPHPMYSIGYAGYYGI. At 301–306 the chain is on the cytoplasmic side; it reads SMMAAS. Residues 307-327 form a helical membrane-spanning segment; that stretch reads YDVLFISIIAHAAQFAFLVIV. The Lumenal portion of the chain corresponds to 328-389; the sequence is ENPHIEKTYN…IGLKNLDFFR (62 aa). Residues 390–410 traverse the membrane as a helical segment; sequence ITDVAIVLLCAYLAVVTMVTP. Residues 411–417 are Cytoplasmic-facing; sequence NTRFYQA. A helical membrane pass occupies residues 418–438; that stretch reads LFVLHALAWRLWYSAGLGVIL. Over 439–467 the chain is Lumenal; the sequence is TMQSEEKMFTRHFLKYGESVGEAWRQWKG. A helical membrane pass occupies residues 468-488; the sequence is IYHLSNCLCHASFIAASYKMY. Residues 489 to 496 lie on the Cytoplasmic side of the membrane; it reads EFPADWTY. Residues 497 to 517 traverse the membrane as a helical segment; the sequence is GWALLKHVVGLSLIALQVWTA. The Lumenal portion of the chain corresponds to 518–573; sequence TSIYESLGEFGWFYGDFFFDSKRQLTYTSIYRFLNNPERVFGTAGLWGAALITWSR. Residues 574 to 594 traverse the membrane as a helical segment; that stretch reads AIFLMALAGHFLTLAFLAYVE. Over 595-965 the chain is Cytoplasmic; it reads KPHMQKVYGR…TTPVDSKFSE (371 aa).

This sequence belongs to the class VI-like SAM-binding methyltransferase superfamily. CHO2 family.

The protein localises to the endoplasmic reticulum membrane. The catalysed reaction is a 1,2-diacyl-sn-glycero-3-phosphoethanolamine + S-adenosyl-L-methionine = a 1,2-diacyl-sn-glycero-3-phospho-N-methylethanolamine + S-adenosyl-L-homocysteine + H(+). Its pathway is phospholipid metabolism; phosphatidylcholine biosynthesis. In terms of biological role, catalyzes the first step of the methylation pathway of phosphatidylcholine biosynthesis, the SAM-dependent methylation of phosphatidylethanolamine (PE) to phosphatidylmonomethylethanolamine (PMME). The protein is Phosphatidylethanolamine N-methyltransferase of Neurospora crassa (strain ATCC 24698 / 74-OR23-1A / CBS 708.71 / DSM 1257 / FGSC 987).